Here is a 222-residue protein sequence, read N- to C-terminus: UPF0758 protein TM_1557 (222 aa).

The MPN domain maps to 101 to 222 (KLDSSVKVYK…YFSFREEGEL (122 aa)). 3 residues coordinate Zn(2+): H171, H173, and D184. A JAMM motif motif is present at residues 171–184 (HNHPSGDPTPSKED).

Belongs to the UPF0758 family.

This is UPF0758 protein TM_1557 from Thermotoga maritima (strain ATCC 43589 / DSM 3109 / JCM 10099 / NBRC 100826 / MSB8).